The primary structure comprises 277 residues: Large ribosomal subunit protein uL2 (277 aa).

Disordered regions lie at residues 32 to 58 and 225 to 277; these read KSLT…RGGG and VAMN…RRNK. Over residues 258–277 the composition is skewed to basic residues; the sequence is YKTRKKKRYSDKFIIKRRNK.

Belongs to the universal ribosomal protein uL2 family. As to quaternary structure, part of the 50S ribosomal subunit. Forms a bridge to the 30S subunit in the 70S ribosome.

Functionally, one of the primary rRNA binding proteins. Required for association of the 30S and 50S subunits to form the 70S ribosome, for tRNA binding and peptide bond formation. It has been suggested to have peptidyltransferase activity; this is somewhat controversial. Makes several contacts with the 16S rRNA in the 70S ribosome. The sequence is that of Large ribosomal subunit protein uL2 from Borreliella afzelii (strain PKo) (Borrelia afzelii).